The following is a 183-amino-acid chain: SAGA-associated factor 11 homolog (183 aa).

An SGF11-type zinc finger spans residues 98-119; that stretch reads CSCPNCNRIVAASRFAPHLEKC. A disordered region spans residues 140–167; sequence GGNYFGADEDDEDDADWSGEKRKKKIAP. Residues 146–156 show a composition bias toward acidic residues; it reads ADEDDEDDADW.

It belongs to the SGF11 family. As to quaternary structure, component of some SAGA transcription coactivator-HAT complexes. Within the SAGA complex, participates in a subcomplex of SAGA called the DUB module (deubiquitination module).

It is found in the nucleus. In terms of biological role, component of the transcription regulatory histone acetylation (HAT) complex SAGA, a multiprotein complex that activates transcription by remodeling chromatin and mediating histone acetylation and deubiquitination. Within the SAGA complex, participates in a subcomplex that specifically deubiquitinates histone H2B. The SAGA complex is recruited to specific gene promoters by activators, where it is required for transcription. The polypeptide is SAGA-associated factor 11 homolog (Culex quinquefasciatus (Southern house mosquito)).